An 88-amino-acid chain; its full sequence is Acylphosphatase (88 aa).

Residues 3–88 (AARFVVSGVV…VPPTEDFVTG (86 aa)) form the Acylphosphatase-like domain. Catalysis depends on residues arginine 18 and asparagine 36.

The protein belongs to the acylphosphatase family.

The catalysed reaction is an acyl phosphate + H2O = a carboxylate + phosphate + H(+). In Xanthomonas euvesicatoria pv. vesicatoria (strain 85-10) (Xanthomonas campestris pv. vesicatoria), this protein is Acylphosphatase (acyP).